The sequence spans 345 residues: Protein SHI RELATED SEQUENCE 7 (345 aa).

Residues 7–28 form a disordered region; that stretch reads LGGRDHNKQDHHQEKDHNEDKS. Residues 9–28 show a composition bias toward basic and acidic residues; it reads GRDHNKQDHHQEKDHNEDKS. Residues Cys119, Cys122, Cys130, Cys135, Cys139, and Cys146 each contribute to the Zn(2+) site. The zn(2)-C6 fungal-type; degenerate DNA-binding region spans 119 to 146; the sequence is CQDCGNQAKKDCPHMRCRTCCKSRGFDC. The interval 168-200 is disordered; it reads AVLPAKRIRDANSRGGGDDDDDDKEDEKNDSCG. The Required for homo- and heterodimerization motif lies at 256–259; it reads IGGH.

Belongs to the SHI protein family. Mainly expressed in the filaments of flowers, the shoot apex regions and pollen. Also present in leaves.

It is found in the nucleus. In terms of biological role, transcription activator that binds DNA on 5'-ACTCTAC-3' and promotes auxin homeostasis-regulating gene expression (e.g. YUC genes), as well as genes affecting stamen development, cell expansion and timing of flowering. Synergistically with other SHI-related proteins, regulates gynoecium, stamen and leaf development in a dose-dependent manner, controlling apical-basal patterning. Promotes style and stigma formation, and influences vascular development during gynoecium development. May also have a role in the formation and/or maintenance of the shoot apical meristem (SAM). Regulates anther dehiscence and floral development. This Arabidopsis thaliana (Mouse-ear cress) protein is Protein SHI RELATED SEQUENCE 7 (SRS7).